Here is a 295-residue protein sequence, read N- to C-terminus: Tyrosine recombinase XerC (295 aa).

Residues 1-84 (MTLEEQFLSY…SLKSFYRLLT (84 aa)) form the Core-binding (CB) domain. The Tyr recombinase domain occupies 105–289 (KLPEFFYQDE…SMQHLTAEYR (185 aa)). Catalysis depends on residues R145, K169, H241, R244, and H267. Y276 (O-(3'-phospho-DNA)-tyrosine intermediate) is an active-site residue.

This sequence belongs to the 'phage' integrase family. XerC subfamily. As to quaternary structure, forms a cyclic heterotetrameric complex composed of two molecules of XerC and two molecules of XerD.

The protein resides in the cytoplasm. In terms of biological role, site-specific tyrosine recombinase, which acts by catalyzing the cutting and rejoining of the recombining DNA molecules. The XerC-XerD complex is essential to convert dimers of the bacterial chromosome into monomers to permit their segregation at cell division. It also contributes to the segregational stability of plasmids. The polypeptide is Tyrosine recombinase XerC (Lactobacillus leichmannii).